The following is a 490-amino-acid chain: AP-5 complex subunit mu-1 (490 aa).

Positions 206-476 constitute an MHD domain; it reads KPQVSISITE…LISSDYYIWN (271 aa).

This sequence belongs to the adaptor complexes medium subunit family. As to quaternary structure, probably part of the adaptor protein complex 5 (AP-5) a tetramer composed of AP5B1, AP5M1, AP5S1 and AP5Z1.

The protein resides in the cytoplasm. Its subcellular location is the cytosol. The protein localises to the late endosome membrane. It is found in the lysosome membrane. As part of AP-5, a probable fifth adaptor protein complex it may be involved in endosomal transport. In Bos taurus (Bovine), this protein is AP-5 complex subunit mu-1 (AP5M1).